We begin with the raw amino-acid sequence, 583 residues long: Isocitrate dehydrogenase kinase/phosphatase (583 aa).

ATP is bound by residues 315 to 321 (APGIRGM) and Lys336. Asp371 is a catalytic residue.

Belongs to the AceK family.

It is found in the cytoplasm. It catalyses the reaction L-seryl-[isocitrate dehydrogenase] + ATP = O-phospho-L-seryl-[isocitrate dehydrogenase] + ADP + H(+). In terms of biological role, bifunctional enzyme which can phosphorylate or dephosphorylate isocitrate dehydrogenase (IDH) on a specific serine residue. This is a regulatory mechanism which enables bacteria to bypass the Krebs cycle via the glyoxylate shunt in response to the source of carbon. When bacteria are grown on glucose, IDH is fully active and unphosphorylated, but when grown on acetate or ethanol, the activity of IDH declines drastically concomitant with its phosphorylation. This is Isocitrate dehydrogenase kinase/phosphatase from Salmonella paratyphi B (strain ATCC BAA-1250 / SPB7).